The following is a 245-amino-acid chain: Phosphoadenosine 5'-phosphosulfate reductase (245 aa).

Residue cysteine 239 is the Nucleophile; cysteine thiosulfonate intermediate of the active site.

The protein belongs to the PAPS reductase family. CysH subfamily.

Its subcellular location is the cytoplasm. It catalyses the reaction [thioredoxin]-disulfide + sulfite + adenosine 3',5'-bisphosphate + 2 H(+) = [thioredoxin]-dithiol + 3'-phosphoadenylyl sulfate. The protein operates within sulfur metabolism; hydrogen sulfide biosynthesis; sulfite from sulfate: step 3/3. Catalyzes the formation of sulfite from phosphoadenosine 5'-phosphosulfate (PAPS) using thioredoxin as an electron donor. The polypeptide is Phosphoadenosine 5'-phosphosulfate reductase (Shewanella oneidensis (strain ATCC 700550 / JCM 31522 / CIP 106686 / LMG 19005 / NCIMB 14063 / MR-1)).